The sequence spans 680 residues: Epithelial splicing regulatory protein 1 (680 aa).

3 consecutive RRM domains span residues 224–301 (TVVR…KATG), 325–405 (VIVR…RSTA), and 444–524 (DCIR…QCSA). Ser542 bears the Phosphoserine mark. The residue at position 581 (Arg581) is an Omega-N-methylarginine.

Belongs to the ESRP family. Epithelial cell-specific. Epithelial-specific expression in diverse tissues and organs with particularly notable levels of expression in skin and gastrointestinal epithelia.

It localises to the nucleus. MRNA splicing factor that regulates the formation of epithelial cell-specific isoforms. Specifically regulates the expression of FGFR2-IIIb, an epithelial cell-specific isoform of FGFR2. Also regulates the splicing of CD44, CTNND1, ENAH, 3 transcripts that undergo changes in splicing during the epithelial-to-mesenchymal transition (EMT). Acts by directly binding specific sequences in mRNAs. Binds the GU-rich sequence motifs in the ISE/ISS-3, a cis-element regulatory region present in the mRNA of FGFR2. Regulates splicing and expression of genes involved in inner ear development, auditory hair cell differentiation, and cell fate specification in the cochlear epithelium. This is Epithelial splicing regulatory protein 1 (Esrp1) from Mus musculus (Mouse).